Reading from the N-terminus, the 506-residue chain is UDP-N-acetylmuramoylalanine--D-glutamate ligase (506 aa).

128–134 (GTNGKTT) provides a ligand contact to ATP.

The protein belongs to the MurCDEF family.

It localises to the cytoplasm. It carries out the reaction UDP-N-acetyl-alpha-D-muramoyl-L-alanine + D-glutamate + ATP = UDP-N-acetyl-alpha-D-muramoyl-L-alanyl-D-glutamate + ADP + phosphate + H(+). The protein operates within cell wall biogenesis; peptidoglycan biosynthesis. Cell wall formation. Catalyzes the addition of glutamate to the nucleotide precursor UDP-N-acetylmuramoyl-L-alanine (UMA). The protein is UDP-N-acetylmuramoylalanine--D-glutamate ligase of Albidiferax ferrireducens (strain ATCC BAA-621 / DSM 15236 / T118) (Rhodoferax ferrireducens).